We begin with the raw amino-acid sequence, 262 residues long: 4-hydroxy-2-oxovalerate aldolase (262 aa).

Catalysis depends on histidine 48, which acts as the Proton acceptor. Glutamine 149 lines the substrate pocket. Glutamate 151 lines the Mg(2+) pocket. 2 residues coordinate substrate: alanine 176 and aspartate 177. Aspartate 177 is a Mg(2+) binding site.

It belongs to the HpcH/HpaI aldolase family.

It carries out the reaction (S)-4-hydroxy-2-oxopentanoate = acetaldehyde + pyruvate. The protein operates within xenobiotic degradation; biphenyl degradation. In terms of biological role, catalyzes the reversible retro-aldol cleavage of 4-hydroxy-2-oxovalerate to pyruvate and acetaldehyde. The polypeptide is 4-hydroxy-2-oxovalerate aldolase (bphF) (Novosphingobium aromaticivorans (Sphingomonas aromaticivorans)).